The chain runs to 575 residues: Proline--tRNA ligase (575 aa).

The protein belongs to the class-II aminoacyl-tRNA synthetase family. ProS type 1 subfamily. As to quaternary structure, homodimer.

Its subcellular location is the cytoplasm. It catalyses the reaction tRNA(Pro) + L-proline + ATP = L-prolyl-tRNA(Pro) + AMP + diphosphate. Catalyzes the attachment of proline to tRNA(Pro) in a two-step reaction: proline is first activated by ATP to form Pro-AMP and then transferred to the acceptor end of tRNA(Pro). As ProRS can inadvertently accommodate and process non-cognate amino acids such as alanine and cysteine, to avoid such errors it has two additional distinct editing activities against alanine. One activity is designated as 'pretransfer' editing and involves the tRNA(Pro)-independent hydrolysis of activated Ala-AMP. The other activity is designated 'posttransfer' editing and involves deacylation of mischarged Ala-tRNA(Pro). The misacylated Cys-tRNA(Pro) is not edited by ProRS. The sequence is that of Proline--tRNA ligase from Anaeromyxobacter sp. (strain Fw109-5).